We begin with the raw amino-acid sequence, 215 residues long: uncharacterized protein (215 aa).

The S-adenosyl-L-methionine site is built by glycine 53, glutamate 74, and aspartate 97.

It belongs to the methyltransferase superfamily. YrrT family.

Its function is as follows. Could be a S-adenosyl-L-methionine-dependent methyltransferase. This is an uncharacterized protein from Geobacillus thermodenitrificans (strain NG80-2).